Reading from the N-terminus, the 202-residue chain is 3-isopropylmalate dehydratase small subunit (202 aa).

The protein belongs to the LeuD family. LeuD type 1 subfamily. As to quaternary structure, heterodimer of LeuC and LeuD.

The catalysed reaction is (2R,3S)-3-isopropylmalate = (2S)-2-isopropylmalate. Its pathway is amino-acid biosynthesis; L-leucine biosynthesis; L-leucine from 3-methyl-2-oxobutanoate: step 2/4. In terms of biological role, catalyzes the isomerization between 2-isopropylmalate and 3-isopropylmalate, via the formation of 2-isopropylmaleate. The polypeptide is 3-isopropylmalate dehydratase small subunit (Paenarthrobacter aurescens (strain TC1)).